Consider the following 416-residue polypeptide: UDP-N-acetylglucosamine 1-carboxyvinyltransferase (416 aa).

Residue 22 to 23 (KN) coordinates phosphoenolpyruvate. R91 contacts UDP-N-acetyl-alpha-D-glucosamine. C115 acts as the Proton donor in catalysis. C115 carries the post-translational modification 2-(S-cysteinyl)pyruvic acid O-phosphothioketal. UDP-N-acetyl-alpha-D-glucosamine-binding residues include D304 and I326.

Belongs to the EPSP synthase family. MurA subfamily.

The protein resides in the cytoplasm. The catalysed reaction is phosphoenolpyruvate + UDP-N-acetyl-alpha-D-glucosamine = UDP-N-acetyl-3-O-(1-carboxyvinyl)-alpha-D-glucosamine + phosphate. It functions in the pathway cell wall biogenesis; peptidoglycan biosynthesis. In terms of biological role, cell wall formation. Adds enolpyruvyl to UDP-N-acetylglucosamine. The chain is UDP-N-acetylglucosamine 1-carboxyvinyltransferase from Thermodesulfovibrio yellowstonii (strain ATCC 51303 / DSM 11347 / YP87).